The sequence spans 126 residues: NADH-quinone oxidoreductase subunit A (126 aa).

A run of 3 helical transmembrane segments spans residues 14–34, 66–86, and 96–116; these read FLYF…TSWF, FYLI…LYAW, and IGFV…FYLV.

It belongs to the complex I subunit 3 family. As to quaternary structure, NDH-1 is composed of 13 different subunits. Subunits NuoA, H, J, K, L, M, N constitute the membrane sector of the complex.

The protein resides in the cell membrane. It catalyses the reaction a quinone + NADH + 5 H(+)(in) = a quinol + NAD(+) + 4 H(+)(out). Its function is as follows. NDH-1 shuttles electrons from NADH, via FMN and iron-sulfur (Fe-S) centers, to quinones in the respiratory chain. The immediate electron acceptor for the enzyme in this species is believed to be ubiquinone. Couples the redox reaction to proton translocation (for every two electrons transferred, four hydrogen ions are translocated across the cytoplasmic membrane), and thus conserves the redox energy in a proton gradient. The protein is NADH-quinone oxidoreductase subunit A of Buchnera aphidicola subsp. Schizaphis graminum (strain Sg).